The following is a 288-amino-acid chain: NADPH-dependent aldehyde reductase 1, chloroplastic (288 aa).

Over residues 1–18 (MASEKQKQHAQPGKEHVM) the composition is skewed to basic and acidic residues. The interval 1–32 (MASEKQKQHAQPGKEHVMESSPQFSSSDYQPS) is disordered. Residues 20 to 32 (SSPQFSSSDYQPS) are compositionally biased toward polar residues. Position 47–71 (47–71 (SGIGRAVGYCFASEGATVAFTYVKG)) interacts with NADP(+). Residue Ser-179 participates in substrate binding. The active-site Proton acceptor is the Tyr-192.

It belongs to the short-chain dehydrogenases/reductases (SDR) family.

Its subcellular location is the plastid. The protein resides in the chloroplast. Aldehyde reductase that catalyzes the reduction of the aldehyde carbonyl groups on saturated and alpha,beta-unsaturated aldehydes with more than 5 carbons. No activity on alpha,beta-unsaturated ketones. Can use propionaldehyde, butyraldehyde, methylglyoxal, (e)-2-pentenal, (E)-2-hexenal, (Z)-3-hexenal and (E)-2-nonenal as substrates, but not propenal (acrolein), crotonaldehyde, 2-butanone, 3-buten-2-one or 1-penten-3-one. May act as a short alcohol-polyol-sugar dehydrogenase possibly related to carbohydrate metabolism and the acquisition of desiccation tolerance. May also be involved in signal transduction. The chain is NADPH-dependent aldehyde reductase 1, chloroplastic from Arabidopsis thaliana (Mouse-ear cress).